The chain runs to 387 residues: Trichocyst matrix protein T2-C (387 aa).

The N-terminal stretch at 1-19 is a signal peptide; the sequence is MKTIILALALIVLASSTQA. Positions 20-48 are excised as a propeptide; that stretch reads DVIATIKKIDQSPFGRTLFDTIWLELQTG. Positions 51-163 form a coiled coil; the sequence is LDRLLQTLTD…KVLEHQEATA (113 aa). Positions 184 to 239 are excised as a propeptide; sequence KGKATKQPAHKFTKEVASMIQKHFTTSAKKAAKFQHRKGYSKLFKAFATIASKVEQ. A coiled-coil region spans residues 294–333; that stretch reads TALANAQSDLAALNDVIAQVEASLDTTNQRIENVSADRND.

The protein belongs to the TMP family. Two components are produced by post-translational processing from the precursor peptide.

The protein resides in the trichocyst. Structural protein that crystallize inside the trichocyst matrix. This Paramecium tetraurelia protein is Trichocyst matrix protein T2-C (T2C).